Here is a 116-residue protein sequence, read N- to C-terminus: Large ribosomal subunit protein bL20 (116 aa).

Belongs to the bacterial ribosomal protein bL20 family.

Binds directly to 23S ribosomal RNA and is necessary for the in vitro assembly process of the 50S ribosomal subunit. It is not involved in the protein synthesizing functions of that subunit. This chain is Large ribosomal subunit protein bL20, found in Mycoplasmopsis agalactiae (strain NCTC 10123 / CIP 59.7 / PG2) (Mycoplasma agalactiae).